We begin with the raw amino-acid sequence, 574 residues long: MYIRRLNDQTANQIAAGEVVERPASVVKELIENSIDAHASCIRVDILQGGAKQIRIQDDGDGIHPEDLVLALERHATSKIAKIDDLQDITTLGFRGEALASISAVSRLTLTSRQKNAEMGYRISNISHKIMTPVPAAHPQGTTIDVQDLFYNTPARRKFLRSPATEFQHIRRIIERLALSHFTTEFLLHHNEKEIIHFKSATTISGQENRIKSILGDVFMQSALAIEFSQSGLTLKGYIAEAAYTRSQPDLQYIYVNGRFVRDKLVAQALRQAYHDVLFHGRHPAYVLYLEIDPAFVDINVHPTKHEVRFRDPQWVRDFLIHAVKTALAQAKPGIVHPLPQSTAEYNPITNFAPTPLIEGQGNLSLIQEQPAPYTQTIVHKHPLGHALAQLQGIYILSQNEKGLVIVDMHAAHERILYEKMKKQLAEVGLAMQSLLVPINLSLNPQEITAWQTNKALFARLGFEIESFGPDKIVVRRHPSLLKPKNLENLIRDVLADLITHNTTSRVGERINAALATLACHAALRAPHYLTIEEMEALLREMEKTEHGGLCNHGRPTWKQFDIAELDTFFLRGQ.

It belongs to the DNA mismatch repair MutL/HexB family.

Its function is as follows. This protein is involved in the repair of mismatches in DNA. It is required for dam-dependent methyl-directed DNA mismatch repair. May act as a 'molecular matchmaker', a protein that promotes the formation of a stable complex between two or more DNA-binding proteins in an ATP-dependent manner without itself being part of a final effector complex. This is DNA mismatch repair protein MutL from Coxiella burnetii (strain RSA 331 / Henzerling II).